Here is a 149-residue protein sequence, read N- to C-terminus: Small ribosomal subunit protein uS13 (149 aa).

The protein belongs to the universal ribosomal protein uS13 family. In terms of assembly, part of the 30S ribosomal subunit. Forms a loose heterodimer with protein S19. Forms two bridges to the 50S subunit in the 70S ribosome.

Its function is as follows. Located at the top of the head of the 30S subunit, it contacts several helices of the 16S rRNA. In the 70S ribosome it contacts the 23S rRNA (bridge B1a) and protein L5 of the 50S subunit (bridge B1b), connecting the 2 subunits; these bridges are implicated in subunit movement. The polypeptide is Small ribosomal subunit protein uS13 (Thermococcus kodakarensis (strain ATCC BAA-918 / JCM 12380 / KOD1) (Pyrococcus kodakaraensis (strain KOD1))).